A 338-amino-acid chain; its full sequence is Sulfotransferase 2B1 (338 aa).

3'-phosphoadenylyl sulfate is bound at residue 67–72 (KSGTNW). Substrate-binding residues include W95 and W100. Catalysis depends on H122, which acts as the Proton acceptor. Residues R144, S152, Y207, 241 to 246 (SAFAAM), and 271 to 273 (RKG) each bind 3'-phosphoadenylyl sulfate. Positions 301–338 (VQRFPWDTSEEDSSPDGQPDPEPSPSPASDDPNPGSSQ) are disordered. Positions 327-338 (PASDDPNPGSSQ) are enriched in low complexity.

It belongs to the sulfotransferase 1 family. As to expression, expressed at high levels in epididymis, intestine and uterus, and low levels in brain and hypothalamus. Isoform 2 is most prominent in the brain and spinal cord, with modest expression in the lung, skin and spleen. Isoform 1 is most prominently expressed in skin and small intestine, with modest expression in muscle and prostate.

It is found in the cytoplasm. The protein localises to the cytosol. Its subcellular location is the microsome. The protein resides in the nucleus. The enzyme catalyses an alcohol + 3'-phosphoadenylyl sulfate = an alkyl sulfate + adenosine 3',5'-bisphosphate + H(+). It carries out the reaction pregnenolone + 3'-phosphoadenylyl sulfate = pregnenolone sulfate + adenosine 3',5'-bisphosphate + H(+). It catalyses the reaction 3beta-hydroxyandrost-5-en-17-one + 3'-phosphoadenylyl sulfate = dehydroepiandrosterone 3-sulfate + adenosine 3',5'-bisphosphate + H(+). The catalysed reaction is cholesterol + 3'-phosphoadenylyl sulfate = cholesterol sulfate + adenosine 3',5'-bisphosphate + H(+). Its function is as follows. Sulfotransferase that utilizes 3'-phospho-5'-adenylyl sulfate (PAPS) as sulfonate donor to catalyze the sulfate conjugation. Preferentially sulfonates cholesterol. Catalyzes sulfation of the 3beta-hydroxyl groups of steroids, such as, pregnenolone and dehydroepiandrosterone (DHEA). Cholesterol sulfation is approximately 10-fold higher than for pregnenolone and 20-fold higher than for DHEA. Plays a role in epidermal cholesterol metabolism and in the regulation of epidermal proliferation and differentiation. Strongly sulfonates pregnenolone, however is capable to sulfonate cholesterol with a high degree of efficiency. DHEA is a relatively poor substrate. This chain is Sulfotransferase 2B1 (Sult2b1), found in Mus musculus (Mouse).